An 853-amino-acid chain; its full sequence is Transcription factor CPH2 (853 aa).

Disordered stretches follow at residues 165–209 and 296–353; these read EPPI…DKNS and NMNP…VHHP. Over residues 180 to 194 the composition is skewed to low complexity; it reads TTTVSSTNSITNTTK. The bHLH domain maps to 205–274; it reads KDKNSHNMIE…TKATEYIKHL (70 aa). Pro residues predominate over residues 301 to 315; the sequence is SLPPPPQQMQAPPQP. Residues 330 to 352 show a composition bias toward low complexity; the sequence is TPASQYPSPQQQVSPTQQQTVHH.

The protein localises to the nucleus. Transcription factor that positively controls filamentous growth, virulence, and invasiveness. Binds directly to the two SRE-1-like elements upstream of TEC1 and thus positively regulates expression of this important hyphal growth regulator. Functions independently of known signaling cascades involving EFG1. Also regulates gene expression during intestinal colonization but is not involved in host cell adhesion. The chain is Transcription factor CPH2 (CPH2) from Candida albicans (strain SC5314 / ATCC MYA-2876) (Yeast).